The primary structure comprises 356 residues: MDEVIVELKERSYPIYFDYEGFDRVGDLIKKHVRSSKTFVITDSNVYPLYFEKIEESLRKSGFDVLYEVIPAGETSKTMEMAQRLLEVAYDSGLLRDSSIIALGGGVVGDIAGFVAATYMRGIDFIQIPTTLLAQVDSSVGGKVAVNLKKGKNIVGAFYQPKMVYIDTSVLGTLNKREVLGGLAEVIKYGVIWDFDLFTYIEENLGDILRLKKEDLTYIVKRSCEIKAKVVSLDEKEENLRAILNFGHTIGHAIEALTGYERYIHGEAVAIGMAYEARLAFNLGYIDEGYLERILNLIKRAGLPADYEGIEKTDMLNAIKLDKKMREGRINFVLPVGLGKVDIVSVKEEDVLKVLK.

Residues 106 to 110 (GVVGD), 130 to 131 (TT), Lys-143, and Lys-152 contribute to the NAD(+) site. Residues Glu-185, His-248, and His-265 each coordinate Zn(2+).

This sequence belongs to the sugar phosphate cyclases superfamily. Dehydroquinate synthase family. NAD(+) is required as a cofactor. Requires Co(2+) as cofactor. Zn(2+) serves as cofactor.

Its subcellular location is the cytoplasm. It catalyses the reaction 7-phospho-2-dehydro-3-deoxy-D-arabino-heptonate = 3-dehydroquinate + phosphate. Its pathway is metabolic intermediate biosynthesis; chorismate biosynthesis; chorismate from D-erythrose 4-phosphate and phosphoenolpyruvate: step 2/7. In terms of biological role, catalyzes the conversion of 3-deoxy-D-arabino-heptulosonate 7-phosphate (DAHP) to dehydroquinate (DHQ). The sequence is that of 3-dehydroquinate synthase from Caldanaerobacter subterraneus subsp. tengcongensis (strain DSM 15242 / JCM 11007 / NBRC 100824 / MB4) (Thermoanaerobacter tengcongensis).